We begin with the raw amino-acid sequence, 291 residues long: 4-hydroxy-tetrahydrodipicolinate synthase (291 aa).

Threonine 47 contacts pyruvate. Residue tyrosine 136 is the Proton donor/acceptor of the active site. The active-site Schiff-base intermediate with substrate is lysine 164. Isoleucine 206 contributes to the pyruvate binding site.

It belongs to the DapA family. Homotetramer; dimer of dimers.

The protein resides in the cytoplasm. The catalysed reaction is L-aspartate 4-semialdehyde + pyruvate = (2S,4S)-4-hydroxy-2,3,4,5-tetrahydrodipicolinate + H2O + H(+). The protein operates within amino-acid biosynthesis; L-lysine biosynthesis via DAP pathway; (S)-tetrahydrodipicolinate from L-aspartate: step 3/4. Its function is as follows. Catalyzes the condensation of (S)-aspartate-beta-semialdehyde [(S)-ASA] and pyruvate to 4-hydroxy-tetrahydrodipicolinate (HTPA). In Leuconostoc citreum (strain KM20), this protein is 4-hydroxy-tetrahydrodipicolinate synthase.